The following is a 120-amino-acid chain: Spermidine export protein MdtJ (120 aa).

4 helical membrane-spanning segments follow: residues 1 to 21 (MFYW…TLSM), 31 to 51 (AGFI…SFAV), 54 to 74 (IALG…ITIF), and 81 to 101 (EALS…IVLI).

Belongs to the drug/metabolite transporter (DMT) superfamily. Small multidrug resistance (SMR) (TC 2.A.7.1) family. MdtJ subfamily. As to quaternary structure, forms a complex with MdtI.

The protein resides in the cell inner membrane. In terms of biological role, catalyzes the excretion of spermidine. This Salmonella paratyphi A (strain ATCC 9150 / SARB42) protein is Spermidine export protein MdtJ.